We begin with the raw amino-acid sequence, 495 residues long: UDP-glycosyltransferase 73C25 (495 aa).

Residue Gly23–Ile26 coordinates UDP-alpha-D-glucose. Catalysis depends on His24, which acts as the Proton acceptor. The active-site Charge relay is the Asp129. UDP-alpha-D-glucose is bound by residues Trp355–Gln358, His373–Glu381, and Asp397–Gln398.

This sequence belongs to the UDP-glycosyltransferase family.

In terms of biological role, catalyzes the transfer of a glucose (Glc) moiety from UDP-Glc to the C-28 carboxylic group of oleanolate 3-O-beta-D-glucoside to form oleanolate 3,28-O-beta-D-diglucoside. The chain is UDP-glycosyltransferase 73C25 from Barbarea vulgaris (Yellow rocket).